Consider the following 144-residue polypeptide: Large ribosomal subunit protein uL13 (144 aa).

Belongs to the universal ribosomal protein uL13 family. As to quaternary structure, part of the 50S ribosomal subunit.

In terms of biological role, this protein is one of the early assembly proteins of the 50S ribosomal subunit, although it is not seen to bind rRNA by itself. It is important during the early stages of 50S assembly. In Legionella pneumophila (strain Paris), this protein is Large ribosomal subunit protein uL13.